We begin with the raw amino-acid sequence, 757 residues long: Palmitoyltransferase AKR1 (757 aa).

2 stretches are compositionally biased toward polar residues: residues 1–20 (MSDINTESGESTSLPNSTDP) and 36–46 (ESISSLQPIVS). The disordered stretch occupies residues 1–54 (MSDINTESGESTSLPNSTDPPLSDVNIDVEDDDTAESISSLQPIVSNTTNPPEE). The Cytoplasmic portion of the chain corresponds to 1–307 (MSDINTESGE…KLFKKSDHAK (307 aa)). ANK repeat units lie at residues 58-88 (PVLGQYHQACQKGDLATVKQLLDSGVLDLNT), 92-121 (GDITGLHWASINNRLSVVKYLISQGIDVNA), 126-155 (LEATPLHWAARYGYVHIVDCLLNKGADPTM), 159-188 (QGFNLLHLAVNSSNVMLVAYVLFFVVAKGI), 197-226 (KGRTPLLWAAYQGDSLSVMLLLKFGASTKI), and 230-259 (GGFTPLHWATVKGQPYVLTHLIRDGADFFL). Residues 308 to 328 (VITFFVPLVALSIIFILFTHL) form a helical membrane-spanning segment. The Lumenal portion of the chain corresponds to 329–331 (HPL). Residues 332–352 (FALLISLIFGLAVNKALKELI) traverse the membrane as a helical segment. Residues 353–375 (LPSYSNYGLHSTSLLKSPFLSGT) lie on the Cytoplasmic side of the membrane. The chain crosses the membrane as a helical span at residues 376-396 (FFGSLLLLTIVWIFKIAPFTI). Over 397-402 (FKSRLL) the chain is Lumenal. A helical transmembrane segment spans residues 403 to 423 (TNFFMFLILMQIYYLFIKLIF). Topologically, residues 424–498 (SDPGCVPIET…YNDIGLKNHK (75 aa)) are cytoplasmic. The DHHC domain maps to 455 to 505 (NFCLETWIRKPLRSHFSTLNTHNVARFDHFCPWIYNDIGLKNHKNFMWFIL). Cys-485 functions as the S-palmitoyl cysteine intermediate in the catalytic mechanism. A helical transmembrane segment spans residues 499-519 (NFMWFILLTEVGIWFFISLTM). At 520–550 (KYFDILEDTNEDVACFLLGDDELCAGFVYDR) the chain is on the lumenal side. A helical transmembrane segment spans residues 551 to 571 (FTFLIALWALIQSVWVGFLIV). Topologically, residues 572–757 (VQVFQTFTGV…YPEPTGPESV (186 aa)) are cytoplasmic. The segment at 614 to 647 (ELRNDDDDTAASRTGNNPNHSNGTTIPSEGSRIN) is disordered. The segment covering 624-646 (ASRTGNNPNHSNGTTIPSEGSRI) has biased composition (polar residues).

Belongs to the DHHC palmitoyltransferase family. AKR/ZDHHC17 subfamily.

It is found in the early endosome membrane. The protein resides in the golgi apparatus membrane. The enzyme catalyses L-cysteinyl-[protein] + hexadecanoyl-CoA = S-hexadecanoyl-L-cysteinyl-[protein] + CoA. In terms of biological role, palmitoyltransferase specific for casein kinase 1. The chain is Palmitoyltransferase AKR1 (AKR1) from Naumovozyma castellii (Yeast).